Here is a 616-residue protein sequence, read N- to C-terminus: Dihydroxy-acid dehydratase (616 aa).

Position 81 (Asp81) interacts with Mg(2+). Residue Cys122 coordinates [2Fe-2S] cluster. Asp123 and Lys124 together coordinate Mg(2+). Lys124 bears the N6-carboxylysine mark. Residue Cys195 participates in [2Fe-2S] cluster binding. Position 491 (Glu491) interacts with Mg(2+). The active-site Proton acceptor is the Ser517.

This sequence belongs to the IlvD/Edd family. Homodimer. [2Fe-2S] cluster serves as cofactor. It depends on Mg(2+) as a cofactor.

It catalyses the reaction (2R)-2,3-dihydroxy-3-methylbutanoate = 3-methyl-2-oxobutanoate + H2O. The enzyme catalyses (2R,3R)-2,3-dihydroxy-3-methylpentanoate = (S)-3-methyl-2-oxopentanoate + H2O. Its pathway is amino-acid biosynthesis; L-isoleucine biosynthesis; L-isoleucine from 2-oxobutanoate: step 3/4. The protein operates within amino-acid biosynthesis; L-valine biosynthesis; L-valine from pyruvate: step 3/4. Functionally, functions in the biosynthesis of branched-chain amino acids. Catalyzes the dehydration of (2R,3R)-2,3-dihydroxy-3-methylpentanoate (2,3-dihydroxy-3-methylvalerate) into 2-oxo-3-methylpentanoate (2-oxo-3-methylvalerate) and of (2R)-2,3-dihydroxy-3-methylbutanoate (2,3-dihydroxyisovalerate) into 2-oxo-3-methylbutanoate (2-oxoisovalerate), the penultimate precursor to L-isoleucine and L-valine, respectively. The chain is Dihydroxy-acid dehydratase from Pectobacterium carotovorum subsp. carotovorum (strain PC1).